Consider the following 893-residue polypeptide: DNA mismatch repair protein MutS (893 aa).

Position 631–638 (631–638 (GPNMAGKS)) interacts with ATP. Residues 821–858 (AGRPRVAVRQPQGGRRGASTGQLGLFGMEPAQGGTGVT) are disordered.

This sequence belongs to the DNA mismatch repair MutS family.

In terms of biological role, this protein is involved in the repair of mismatches in DNA. It is possible that it carries out the mismatch recognition step. This protein has a weak ATPase activity. The protein is DNA mismatch repair protein MutS of Myxococcus xanthus (strain DK1622).